The primary structure comprises 189 residues: Segregation and condensation protein B (189 aa).

It belongs to the ScpB family. Homodimer. Homodimerization may be required to stabilize the binding of ScpA to the Smc head domains. Component of a cohesin-like complex composed of ScpA, ScpB and the Smc homodimer, in which ScpA and ScpB bind to the head domain of Smc. The presence of the three proteins is required for the association of the complex with DNA.

The protein localises to the cytoplasm. Its function is as follows. Participates in chromosomal partition during cell division. May act via the formation of a condensin-like complex containing Smc and ScpA that pull DNA away from mid-cell into both cell halves. This chain is Segregation and condensation protein B, found in Streptococcus sanguinis (strain SK36).